The primary structure comprises 178 residues: Gamma-crystallin S (178 aa).

Ser2 carries the N-acetylserine modification. An N-terminal arm region spans residues 2 to 5 (SKTG). 2 consecutive Beta/gamma crystallin 'Greek key' domains span residues 6 to 44 (AKISFYEDRNFQGRRYDCDCDCVDFRSYLSRCNSIRVEG) and 45 to 87 (GTWA…RAVH). Residues 88 to 93 (LSSGGQ) are connecting peptide. 2 consecutive Beta/gamma crystallin 'Greek key' domains span residues 94–134 (YKIQ…KVLE) and 135–177 (GTWI…RRIV).

The protein belongs to the beta/gamma-crystallin family. In terms of assembly, monomer.

Its function is as follows. Crystallins are the dominant structural components of the vertebrate eye lens. The sequence is that of Gamma-crystallin S (Crygs) from Rattus norvegicus (Rat).